A 211-amino-acid chain; its full sequence is Large ribosomal subunit protein bL25 (211 aa).

Disordered stretches follow at residues 1–23 (MAGEIPDLVAEPRAGTGKGAARQ) and 191–211 (LRSADNEADEEETEEATAEEV). The segment covering 196-211 (NEADEEETEEATAEEV) has biased composition (acidic residues).

This sequence belongs to the bacterial ribosomal protein bL25 family. CTC subfamily. Part of the 50S ribosomal subunit; part of the 5S rRNA/L5/L18/L25 subcomplex. Contacts the 5S rRNA. Binds to the 5S rRNA independently of L5 and L18.

In terms of biological role, this is one of the proteins that binds to the 5S RNA in the ribosome where it forms part of the central protuberance. The polypeptide is Large ribosomal subunit protein bL25 (Dinoroseobacter shibae (strain DSM 16493 / NCIMB 14021 / DFL 12)).